The following is a 276-amino-acid chain: Large ribosomal subunit protein uL2cy (276 aa).

2 disordered regions span residues 1-25 (MAIH…VKSN) and 225-276 (MNPV…RRSK). Polar residues predominate over residues 7-25 (KTSTPSTRNGTVDSQVKSN).

This sequence belongs to the universal ribosomal protein uL2 family. Part of the 50S ribosomal subunit.

It localises to the plastid. It is found in the chloroplast. This is Large ribosomal subunit protein uL2cy (rpl2-B) from Coffea arabica (Arabian coffee).